The chain runs to 389 residues: S-adenosylmethionine synthase 3 (389 aa).

A Mg(2+)-binding site is contributed by glutamate 9. Histidine 15 contacts ATP. Glutamate 43 contributes to the K(+) binding site. Residues glutamate 56 and glutamine 99 each coordinate L-methionine. Residues aspartate 167–lysine 169, serine 235–phenylalanine 238, aspartate 246, arginine 252–lysine 253, alanine 269, lysine 273, and lysine 277 each bind ATP. An L-methionine-binding site is contributed by aspartate 246. Lysine 277 serves as a coordination point for L-methionine.

The protein belongs to the AdoMet synthase family. In terms of assembly, homotetramer. The cofactor is Mn(2+). Requires Mg(2+) as cofactor. It depends on Co(2+) as a cofactor. K(+) is required as a cofactor.

It localises to the cytoplasm. The catalysed reaction is L-methionine + ATP + H2O = S-adenosyl-L-methionine + phosphate + diphosphate. It participates in amino-acid biosynthesis; S-adenosyl-L-methionine biosynthesis; S-adenosyl-L-methionine from L-methionine: step 1/1. Functionally, catalyzes the formation of S-adenosylmethionine from methionine and ATP. The reaction comprises two steps that are both catalyzed by the same enzyme: formation of S-adenosylmethionine (AdoMet) and triphosphate, and subsequent hydrolysis of the triphosphate. This Vitis vinifera (Grape) protein is S-adenosylmethionine synthase 3 (METK3).